The chain runs to 484 residues: Glutamate--tRNA ligase (484 aa).

The 'HIGH' region signature appears at 12 to 22 (PSPTGEPHVGT). Positions 253–257 (KLSKR) match the 'KMSKS' region motif. Residue Lys256 participates in ATP binding.

The protein belongs to the class-I aminoacyl-tRNA synthetase family. Glutamate--tRNA ligase type 1 subfamily. Monomer.

Its subcellular location is the cytoplasm. The enzyme catalyses tRNA(Glu) + L-glutamate + ATP = L-glutamyl-tRNA(Glu) + AMP + diphosphate. Functionally, catalyzes the attachment of glutamate to tRNA(Glu) in a two-step reaction: glutamate is first activated by ATP to form Glu-AMP and then transferred to the acceptor end of tRNA(Glu). This chain is Glutamate--tRNA ligase, found in Rhizobium leguminosarum bv. trifolii (strain WSM2304).